Reading from the N-terminus, the 76-residue chain is Small ribosomal subunit protein bS18 (76 aa).

It belongs to the bacterial ribosomal protein bS18 family. As to quaternary structure, part of the 30S ribosomal subunit. Forms a tight heterodimer with protein bS6.

In terms of biological role, binds as a heterodimer with protein bS6 to the central domain of the 16S rRNA, where it helps stabilize the platform of the 30S subunit. The chain is Small ribosomal subunit protein bS18 from Desulfitobacterium hafniense (strain Y51).